Reading from the N-terminus, the 369-residue chain is Extracellular signal-regulated kinase 2 (369 aa).

Residues 14 to 304 enclose the Protein kinase domain; the sequence is YEVLQKIGKG…AEEALAHPFV (291 aa). ATP-binding positions include 20 to 28 and Lys-43; that span reads IGKGAYGIV. Asp-137 acts as the Proton acceptor in catalysis. At Thr-176 the chain carries Phosphothreonine. A TXY motif is present at residues 176–178; that stretch reads TEY. Tyr-178 carries the post-translational modification Phosphotyrosine. Positions 346–369 are disordered; it reads KKKEERKKQTNPTKPDTTAPTLST. Residues 355–369 are compositionally biased toward polar residues; that stretch reads TNPTKPDTTAPTLST.

This sequence belongs to the protein kinase superfamily. CMGC Ser/Thr protein kinase family. MAP kinase subfamily. Requires Mg(2+) as cofactor. Dually phosphorylated on Thr-176 and Tyr-178, which activates the enzyme.

It carries out the reaction L-seryl-[protein] + ATP = O-phospho-L-seryl-[protein] + ADP + H(+). It catalyses the reaction L-threonyl-[protein] + ATP = O-phospho-L-threonyl-[protein] + ADP + H(+). Its activity is regulated as follows. Activated by tyrosine and threonine phosphorylation. Functionally, implicated in the relay of the cAMP chemotactic signal and cell differentiation. Important for receptor-mediated activation of adenylyl cyclase. The protein is Extracellular signal-regulated kinase 2 (erkB) of Dictyostelium discoideum (Social amoeba).